Reading from the N-terminus, the 84-residue chain is Agaphelin (84 aa).

A signal peptide spans 1-26; sequence MKMRVHLLAVSVLLVVLALQTTPAEA. The region spanning 29-82 is the Kazal-like domain; that stretch reads NSEMATCACQLIYRPVCASNNESYSNECVLKCASETPTGRSIGLHKVKDGNCNG. Disulfide bonds link C35–C60, C37–C56, and C45–C80. N-linked (GlcNAc...) asparagine glycosylation is present at N49.

As to quaternary structure, interacts with human ELANE.

It is found in the secreted. Functionally, functions as a slow and tight inhibitor of host neutrophil elastase (ELANE). Inhibits host proteinase 3 (PRTN3) and chymotrypsin. Does not inhibit other host proteases involved in coagulation or inflammation, such as cathepsin G (CTSG), trypsin, chymase, matriptase, beta-tryptase, kallikrein, urokinase-type plasminogen activator (PLAU), coagulation factors Xa (F10), XIa (F11), XIIa (F12), plasmin (PLG), thrombin (F2) and tissue-type plasminogen activator (PLAT). Inhibits host neutrophil chemotaxis induced by N-formylmethionine-leucyl-phenylalanine (fMLP) in vitro. Inhibits ELANE-mediated potentiation of platelet aggregation induced by CTSG in the host. Does not affect CTSG- or collagen-induced platelet aggregation. Blocks cleavage of tissue factor pathway inhibitor (TFPI) by ELANE in the host. Inhibits neutrophil-induced coagulation in the host by interfering with neutrophil extracellular traps (NET) formation. Exhibits anti-inflammatory activity. Reduces ischemia-induced activation of MAPK and NF-kappa-B pathways in the host. Decreases CCL2 and IL8 production in IL4- or lipopolysaccharide (LPS)-stimulated host epithelial cells. Reduces caspase-3 (CASP3)-dependent apoptosis in damaged host tissues. The polypeptide is Agaphelin (Anopheles gambiae (African malaria mosquito)).